The following is a 127-amino-acid chain: Apolipoprotein C-IV (127 aa).

Residues 1–27 (MSLLRNRLQDLPALCLCVLVLACIGAC) form the signal peptide.

This sequence belongs to the apolipoprotein C4 family.

The protein localises to the secreted. May participate in lipoprotein metabolism. The sequence is that of Apolipoprotein C-IV (APOC4) from Papio anubis (Olive baboon).